The primary structure comprises 603 residues: Elongation factor 4 (603 aa).

One can recognise a tr-type G domain in the interval 5–187 (RHIRNFCIIA…AVVNFVPPPK (183 aa)). Residues 17–22 (DHGKST) and 134–137 (NKID) contribute to the GTP site.

It belongs to the TRAFAC class translation factor GTPase superfamily. Classic translation factor GTPase family. LepA subfamily.

It localises to the cell membrane. The catalysed reaction is GTP + H2O = GDP + phosphate + H(+). Functionally, required for accurate and efficient protein synthesis under certain stress conditions. May act as a fidelity factor of the translation reaction, by catalyzing a one-codon backward translocation of tRNAs on improperly translocated ribosomes. Back-translocation proceeds from a post-translocation (POST) complex to a pre-translocation (PRE) complex, thus giving elongation factor G a second chance to translocate the tRNAs correctly. Binds to ribosomes in a GTP-dependent manner. The protein is Elongation factor 4 of Symbiobacterium thermophilum (strain DSM 24528 / JCM 14929 / IAM 14863 / T).